We begin with the raw amino-acid sequence, 822 residues long: Stemar-13-ene synthase (822 aa).

Over residues Met-1–Gly-10 the composition is skewed to polar residues. The tract at residues Met-1–Val-29 is disordered. Mg(2+) contacts are provided by Asp-553, Asp-557, Asn-698, Thr-702, and Glu-706. The DDXXD motif signature appears at Asp-553–Asp-557.

Belongs to the terpene synthase family. Mg(2+) is required as a cofactor.

The enzyme catalyses 9alpha-copalyl diphosphate = stemar-13-ene + diphosphate. In terms of biological role, catalyzes the conversion of syn-copalyl diphosphate to the phytoalexin precursor stemarene. This Oryza sativa subsp. japonica (Rice) protein is Stemar-13-ene synthase (KSL8).